Reading from the N-terminus, the 480-residue chain is Thyroid receptor-interacting protein 6 (480 aa).

Positions 1 to 12 (MSGPTWLPPKQP) are enriched in pro residues. Positions 1–43 (MSGPTWLPPKQPEPSRLPQGRSLPRGALGPPTAHGATLQPHPR) are disordered. At Arg-25 the chain carries Asymmetric dimethylarginine; alternate. The residue at position 25 (Arg-25) is an Omega-N-methylarginine; alternate. Position 55 is a phosphotyrosine; by SRC (Tyr-55). The disordered stretch occupies residues 57–84 (PPGVPEDRGPTWVGSHGTPQRLQGLPPD). Ser-92 is modified (phosphoserine). Positions 107 to 134 (LDGGRSHAPRRPDRQAFEAPPPHAYRGG) are disordered. Basic and acidic residues predominate over residues 108–122 (DGGRSHAPRRPDRQA). Residues Arg-111, Arg-183, and Arg-190 each carry the omega-N-methylarginine modification. A Phosphoserine modification is found at Ser-193. Arg-209 and Arg-242 each carry omega-N-methylarginine. Residues 218–257 (RSHREPGPGVPEGPSGVHIPAGGGRGGGHEPQGPLGQPPE) form a disordered region. The span at 238–247 (AGGGRGGGHE) shows a compositional bias: gly residues. 3 consecutive LIM zinc-binding domains span residues 281 to 339 (GRCG…YVAT), 341 to 401 (EKCS…KFAP), and 404 to 471 (SVCG…RIQE). Residues 473–480 (SATVTTDC) form an interaction with MAGI1 and PTPN13 region.

It belongs to the zyxin/ajuba family. Specifically interacts with the ligand binding domain of the thyroid receptor (TR) in the presence of thyroid hormone. Interacts (via the third LIM domain and C-terminus) with PTPN13 (via the second PDZ domain). Interacts (via the second LIM domain or via the third LIM domain plus C-terminus) with PDLIM4 (via PDZ domain). Found in a complex with PTPN13 and PDLIM4. Interacts with SVIL isoform 2. Interacts with LPAR2 but not other LPA receptors. Interacts with PRKAA2. Interacts with MAGI1. Interacts with SCRIB. In case of infection, interacts with S.typhimurium protein sseI. Post-translationally, phosphorylation at Tyr-55 by SRC is required for enhancement of lysophosphatidic acid-induced cell migration. Tyr-55 is dephosphorylated by PTPN13. Highly expressed in kidney, stomach, lung, heart and testis. Low expression levels in brain, colon, thymus, pancreas and skin. Not expressed in skeletal muscle.

The protein localises to the cytoplasm. It localises to the cytoskeleton. Its subcellular location is the cell junction. The protein resides in the focal adhesion. It is found in the nucleus. In terms of biological role, relays signals from the cell surface to the nucleus to weaken adherens junction and promote actin cytoskeleton reorganization and cell invasiveness. Involved in lysophosphatidic acid-induced cell adhesion and migration. Acts as a transcriptional coactivator for NF-kappa-B and JUN, and mediates the transrepression of these transcription factors induced by glucocorticoid receptor. The sequence is that of Thyroid receptor-interacting protein 6 (Trip6) from Mus musculus (Mouse).